The primary structure comprises 114 residues: FK506-binding protein 1 (114 aa).

One can recognise a PPIase FKBP-type domain in the interval 26–114; sequence GDLVTIHYTG…IFEVELLKVN (89 aa).

This sequence belongs to the FKBP-type PPIase family. FKBP1 subfamily.

It is found in the cytoplasm. The enzyme catalyses [protein]-peptidylproline (omega=180) = [protein]-peptidylproline (omega=0). With respect to regulation, inhibited by both FK506 and rapamycin. Its function is as follows. PPIases accelerate the folding of proteins. It catalyzes the cis-trans isomerization of proline imidic peptide bonds in oligopeptides. The sequence is that of FK506-binding protein 1 (FPR1) from Eremothecium gossypii (strain ATCC 10895 / CBS 109.51 / FGSC 9923 / NRRL Y-1056) (Yeast).